A 164-amino-acid chain; its full sequence is Zinc finger protein ZAT8 (164 aa).

2 C2H2-type zinc fingers span residues 37 to 59 (FRCK…RASH) and 85 to 107 (HPCP…MRRH).

Its subcellular location is the nucleus. In terms of biological role, probable transcription factor that may be involved in stress responses. In Arabidopsis thaliana (Mouse-ear cress), this protein is Zinc finger protein ZAT8 (ZAT8).